Here is a 432-residue protein sequence, read N- to C-terminus: Glutamyl-tRNA reductase (432 aa).

Substrate contacts are provided by residues 55–58 (TCNR), S114, 119–121 (ETQ), and Q125. C56 (nucleophile) is an active-site residue. 194–199 (GAGEMI) is a binding site for NADP(+).

This sequence belongs to the glutamyl-tRNA reductase family. In terms of assembly, homodimer.

The catalysed reaction is (S)-4-amino-5-oxopentanoate + tRNA(Glu) + NADP(+) = L-glutamyl-tRNA(Glu) + NADPH + H(+). The protein operates within porphyrin-containing compound metabolism; protoporphyrin-IX biosynthesis; 5-aminolevulinate from L-glutamyl-tRNA(Glu): step 1/2. Its function is as follows. Catalyzes the NADPH-dependent reduction of glutamyl-tRNA(Glu) to glutamate 1-semialdehyde (GSA). In Burkholderia cenocepacia (strain ATCC BAA-245 / DSM 16553 / LMG 16656 / NCTC 13227 / J2315 / CF5610) (Burkholderia cepacia (strain J2315)), this protein is Glutamyl-tRNA reductase.